A 344-amino-acid chain; its full sequence is GTP 3',8-cyclase (344 aa).

The Radical SAM core domain maps to 19-244 (PFARPITYLR…TPLAERTGGP (226 aa)). Arginine 28 contributes to the GTP binding site. [4Fe-4S] cluster contacts are provided by cysteine 35 and cysteine 39. Tyrosine 41 contributes to the S-adenosyl-L-methionine binding site. Cysteine 42 is a [4Fe-4S] cluster binding site. Position 77 (arginine 77) interacts with GTP. Glycine 81 is an S-adenosyl-L-methionine binding site. GTP is bound at residue threonine 110. S-adenosyl-L-methionine is bound at residue serine 134. Lysine 170 is a binding site for GTP. Methionine 204 contributes to the S-adenosyl-L-methionine binding site. [4Fe-4S] cluster contacts are provided by cysteine 268 and cysteine 271. 273 to 275 (RVR) contacts GTP. [4Fe-4S] cluster is bound at residue cysteine 285.

Belongs to the radical SAM superfamily. MoaA family. In terms of assembly, monomer and homodimer. [4Fe-4S] cluster is required as a cofactor.

It carries out the reaction GTP + AH2 + S-adenosyl-L-methionine = (8S)-3',8-cyclo-7,8-dihydroguanosine 5'-triphosphate + 5'-deoxyadenosine + L-methionine + A + H(+). The protein operates within cofactor biosynthesis; molybdopterin biosynthesis. Functionally, catalyzes the cyclization of GTP to (8S)-3',8-cyclo-7,8-dihydroguanosine 5'-triphosphate. The protein is GTP 3',8-cyclase of Paracoccus denitrificans (strain Pd 1222).